The sequence spans 333 residues: Glycerol-3-phosphate dehydrogenase [NAD(P)+] (333 aa).

W15 and K108 together coordinate NADPH. Residues K108, G136, and S138 each contribute to the sn-glycerol 3-phosphate site. An NADPH-binding site is contributed by A140. The sn-glycerol 3-phosphate site is built by K191, D244, S254, R255, and N256. The active-site Proton acceptor is the K191. R255 contacts NADPH. 2 residues coordinate NADPH: V279 and E281.

This sequence belongs to the NAD-dependent glycerol-3-phosphate dehydrogenase family.

Its subcellular location is the cytoplasm. The enzyme catalyses sn-glycerol 3-phosphate + NAD(+) = dihydroxyacetone phosphate + NADH + H(+). It carries out the reaction sn-glycerol 3-phosphate + NADP(+) = dihydroxyacetone phosphate + NADPH + H(+). It functions in the pathway membrane lipid metabolism; glycerophospholipid metabolism. Catalyzes the reduction of the glycolytic intermediate dihydroxyacetone phosphate (DHAP) to sn-glycerol 3-phosphate (G3P), the key precursor for phospholipid synthesis. The polypeptide is Glycerol-3-phosphate dehydrogenase [NAD(P)+] (Maricaulis maris (strain MCS10) (Caulobacter maris)).